The following is a 336-amino-acid chain: Holliday junction branch migration complex subunit RuvB (336 aa).

Positions 4-184 (ADRIISAIAK…FGIVQRLEFY (181 aa)) are large ATPase domain (RuvB-L). ATP-binding positions include isoleucine 23, arginine 24, glycine 65, lysine 68, threonine 69, threonine 70, 131-133 (EDY), arginine 174, tyrosine 184, and arginine 221. Residue threonine 69 coordinates Mg(2+). The interval 185–255 (SIEDLTSIVM…IAKAALAMLD (71 aa)) is small ATPAse domain (RuvB-S). The interval 258-336 (QAGFDYLDRK…HFGLAKLADK (79 aa)) is head domain (RuvB-H). DNA contacts are provided by arginine 294, arginine 313, and arginine 318.

It belongs to the RuvB family. In terms of assembly, homohexamer. Forms an RuvA(8)-RuvB(12)-Holliday junction (HJ) complex. HJ DNA is sandwiched between 2 RuvA tetramers; dsDNA enters through RuvA and exits via RuvB. An RuvB hexamer assembles on each DNA strand where it exits the tetramer. Each RuvB hexamer is contacted by two RuvA subunits (via domain III) on 2 adjacent RuvB subunits; this complex drives branch migration. In the full resolvosome a probable DNA-RuvA(4)-RuvB(12)-RuvC(2) complex forms which resolves the HJ.

The protein resides in the cytoplasm. The enzyme catalyses ATP + H2O = ADP + phosphate + H(+). In terms of biological role, the RuvA-RuvB-RuvC complex processes Holliday junction (HJ) DNA during genetic recombination and DNA repair, while the RuvA-RuvB complex plays an important role in the rescue of blocked DNA replication forks via replication fork reversal (RFR). RuvA specifically binds to HJ cruciform DNA, conferring on it an open structure. The RuvB hexamer acts as an ATP-dependent pump, pulling dsDNA into and through the RuvAB complex. RuvB forms 2 homohexamers on either side of HJ DNA bound by 1 or 2 RuvA tetramers; 4 subunits per hexamer contact DNA at a time. Coordinated motions by a converter formed by DNA-disengaged RuvB subunits stimulates ATP hydrolysis and nucleotide exchange. Immobilization of the converter enables RuvB to convert the ATP-contained energy into a lever motion, pulling 2 nucleotides of DNA out of the RuvA tetramer per ATP hydrolyzed, thus driving DNA branch migration. The RuvB motors rotate together with the DNA substrate, which together with the progressing nucleotide cycle form the mechanistic basis for DNA recombination by continuous HJ branch migration. Branch migration allows RuvC to scan DNA until it finds its consensus sequence, where it cleaves and resolves cruciform DNA. This chain is Holliday junction branch migration complex subunit RuvB, found in Actinobacillus succinogenes (strain ATCC 55618 / DSM 22257 / CCUG 43843 / 130Z).